Reading from the N-terminus, the 1017-residue chain is Probable disease resistance protein RDL5 (1017 aa).

The stretch at 25 to 52 (QGVEDQVTELKRDLNMLSSFLKDANAKK) forms a coiled coil. The 314-residue stretch at 147-460 (KQREMRQKFS…AEGIFQPRHY (314 aa)) folds into the NB-ARC domain. 190–197 (GMGGLGKT) contacts ATP. 7 LRR repeats span residues 602-627 (LIHL…NLKL), 649-674 (MQEL…NLVK), 675-699 (LETL…RLST), 768-791 (PSHL…ILEK), 792-819 (LLQL…GFPQ), 841-865 (MPLL…HLPS), and 937-962 (MPFL…QFIY).

It belongs to the disease resistance NB-LRR family.

Potential disease resistance protein. The sequence is that of Probable disease resistance protein RDL5 (RDL5) from Arabidopsis thaliana (Mouse-ear cress).